The following is a 362-amino-acid chain: Homeobox protein Nkx-2.3 (362 aa).

2 disordered regions span residues 126 to 149 (EAAG…RKPR) and 203 to 222 (QRQD…PPRR). Basic and acidic residues predominate over residues 132–141 (KTSEDGERPK). A DNA-binding region (homeobox) is located at residues 145-204 (RRKPRVLFSQAQVFELERRFKQQRYLSAPEREHLASSLKLTSTQVKIWFQNRRYKCKRQR).

The protein belongs to the NK-2 homeobox family. Expressed in spleen and intestine. Also expressed in salivary gland and tongue.

The protein resides in the nucleus. Functionally, transcriptional regulator essential for normal development and functions of the small intestine and spleen. Activates directly MADCAM1 expression. Required for homing of lymphocytes in spleen and mucosa-associated lymphoid tissue. May have a role during pharyngeal organogenesis. The protein is Homeobox protein Nkx-2.3 (Nkx2-3) of Mus musculus (Mouse).